We begin with the raw amino-acid sequence, 224 residues long: Thymidylate kinase (224 aa).

7-14 (GIEGSGKS) contacts ATP.

It belongs to the thymidylate kinase family.

The catalysed reaction is dTMP + ATP = dTDP + ADP. In terms of biological role, phosphorylation of dTMP to form dTDP in both de novo and salvage pathways of dTTP synthesis. The protein is Thymidylate kinase of Nitratidesulfovibrio vulgaris (strain DP4) (Desulfovibrio vulgaris).